The following is a 479-amino-acid chain: MAQHTVYFPDAFLTQMREAMPSTLSFDDFLAACQRPLRRSIRVNTLKISVADFLQLTAPYGWTLTPIPWCEEGFWIERDDEDALPLGSTAEHLSGLFYIQEASSMLPVAALFADGNSPQRVMDVAAAPGSKTTQIAARMNNEGAILANEFSASRVKVLHANISRCGIRNVALTHFDGRVFGAALPEMFDAILLDAPCSGEGVVRKDPDALKNWSPESNQEIAATQRELIDSAFHALRPGGTLVYSTCTLNREENEAVCLWLKETYPDAVEFLPLGDLFPGADKALTEEGFLHVFPQIYDCEGFFVARLRKTQAIPALPAPKYKVGNFPFIPVKNREAGQICQAAASVGLTWDENLRLWQRDKELWLFPVGIEALIGKVRFSRLGIKLAETHNKGYRWQHEAVIALASPDNVNAFELTPQKAEEWYRGRDVYPQAAPVADDVLVTFQHQPIGLAKRIGSRLKNSYPRELVRDGKLFTGNA.

S-adenosyl-L-methionine contacts are provided by residues 125 to 131 (AAAPGSK), Glu-149, Asp-176, and Asp-194. The Nucleophile role is filled by Cys-247.

The protein belongs to the class I-like SAM-binding methyltransferase superfamily. RsmB/NOP family.

It is found in the cytoplasm. The enzyme catalyses cytidine(1407) in 16S rRNA + S-adenosyl-L-methionine = 5-methylcytidine(1407) in 16S rRNA + S-adenosyl-L-homocysteine + H(+). Specifically methylates the cytosine at position 1407 (m5C1407) of 16S rRNA. The sequence is that of Ribosomal RNA small subunit methyltransferase F from Escherichia fergusonii (strain ATCC 35469 / DSM 13698 / CCUG 18766 / IAM 14443 / JCM 21226 / LMG 7866 / NBRC 102419 / NCTC 12128 / CDC 0568-73).